The primary structure comprises 210 residues: Large ribosomal subunit protein bL17 (210 aa).

A disordered region spans residues 177–210 (TRSAQRPAFEQDAPESDSAPEAEAKTEEETASAN).

This sequence belongs to the bacterial ribosomal protein bL17 family. In terms of assembly, part of the 50S ribosomal subunit. Contacts protein L32.

In Rhodopirellula baltica (strain DSM 10527 / NCIMB 13988 / SH1), this protein is Large ribosomal subunit protein bL17.